We begin with the raw amino-acid sequence, 37 residues long: Large ribosomal subunit protein bL36 (37 aa).

This sequence belongs to the bacterial ribosomal protein bL36 family.

The polypeptide is Large ribosomal subunit protein bL36 (Aromatoleum aromaticum (strain DSM 19018 / LMG 30748 / EbN1) (Azoarcus sp. (strain EbN1))).